Consider the following 249-residue polypeptide: Metal-staphylopine import system ATP-binding protein CntF (249 aa).

An ABC transporter domain is found at 2–244 (IKVTDVEKSY…DNAYTRELIE (243 aa)). 42–49 (GESGSGKS) lines the ATP pocket.

Belongs to the ABC transporter superfamily. As to quaternary structure, the complex is composed of two ATP-binding proteins (CntD and CntF), two transmembrane proteins (CntB and CntC) and a solute-binding protein (CntA).

The protein localises to the cell membrane. Its function is as follows. Part of the ABC transporter complex CntABCDF (Opp1) involved in the uptake of metal in complex with the metallophore staphylopine (StP). May be involved in the import of a large array of divalent metals ions such as nickel, cobalt, zinc, copper and iron. Probably responsible for energy coupling to the transport system. This is Metal-staphylopine import system ATP-binding protein CntF from Staphylococcus aureus (strain Mu50 / ATCC 700699).